The primary structure comprises 332 residues: Glycerol-3-phosphate dehydrogenase [NAD(P)+] (332 aa).

Positions 13, 33, and 105 each coordinate NADPH. Residues lysine 105, glycine 134, and serine 136 each contribute to the sn-glycerol 3-phosphate site. Alanine 138 is an NADPH binding site. Sn-glycerol 3-phosphate contacts are provided by lysine 189, aspartate 242, serine 252, arginine 253, and asparagine 254. The active-site Proton acceptor is lysine 189. An NADPH-binding site is contributed by arginine 253. Glutamate 279 provides a ligand contact to NADPH.

This sequence belongs to the NAD-dependent glycerol-3-phosphate dehydrogenase family.

The protein localises to the cytoplasm. It carries out the reaction sn-glycerol 3-phosphate + NAD(+) = dihydroxyacetone phosphate + NADH + H(+). The catalysed reaction is sn-glycerol 3-phosphate + NADP(+) = dihydroxyacetone phosphate + NADPH + H(+). Its pathway is membrane lipid metabolism; glycerophospholipid metabolism. Functionally, catalyzes the reduction of the glycolytic intermediate dihydroxyacetone phosphate (DHAP) to sn-glycerol 3-phosphate (G3P), the key precursor for phospholipid synthesis. In Halorhodospira halophila (strain DSM 244 / SL1) (Ectothiorhodospira halophila (strain DSM 244 / SL1)), this protein is Glycerol-3-phosphate dehydrogenase [NAD(P)+].